The chain runs to 255 residues: 5'-nucleotidase SurE (255 aa).

A divalent metal cation contacts are provided by D13, D14, S44, and N100.

It belongs to the SurE nucleotidase family. A divalent metal cation is required as a cofactor.

It is found in the cytoplasm. The enzyme catalyses a ribonucleoside 5'-phosphate + H2O = a ribonucleoside + phosphate. Functionally, nucleotidase that shows phosphatase activity on nucleoside 5'-monophosphates. The sequence is that of 5'-nucleotidase SurE from Bacteroides fragilis (strain ATCC 25285 / DSM 2151 / CCUG 4856 / JCM 11019 / LMG 10263 / NCTC 9343 / Onslow / VPI 2553 / EN-2).